A 369-amino-acid polypeptide reads, in one-letter code: Anhydro-N-acetylmuramic acid kinase (369 aa).

Residue 12–19 (GTSLDGVD) participates in ATP binding.

Belongs to the anhydro-N-acetylmuramic acid kinase family.

The catalysed reaction is 1,6-anhydro-N-acetyl-beta-muramate + ATP + H2O = N-acetyl-D-muramate 6-phosphate + ADP + H(+). It functions in the pathway amino-sugar metabolism; 1,6-anhydro-N-acetylmuramate degradation. Its pathway is cell wall biogenesis; peptidoglycan recycling. Functionally, catalyzes the specific phosphorylation of 1,6-anhydro-N-acetylmuramic acid (anhMurNAc) with the simultaneous cleavage of the 1,6-anhydro ring, generating MurNAc-6-P. Is required for the utilization of anhMurNAc either imported from the medium or derived from its own cell wall murein, and thus plays a role in cell wall recycling. The polypeptide is Anhydro-N-acetylmuramic acid kinase (Shigella boydii serotype 18 (strain CDC 3083-94 / BS512)).